Reading from the N-terminus, the 1576-residue chain is THO complex subunit 2 (1576 aa).

Coiled coils occupy residues 293 to 339 (NCIM…KVEK) and 896 to 965 (HTSY…NWLL). The short motif at 923–928 (KKKKEK) is the Nuclear localization signal element. Positions 1184 to 1576 (NEFHHKDPPP…STHKSSDKHR (393 aa)) are disordered. Positions 1218-1234 (KSDESSTEETDKSRERS) are enriched in basic and acidic residues. Serine 1222 is subject to Phosphoserine. Residues 1251–1263 (GNSSNGNSSSNSS) show a composition bias toward low complexity. Basic and acidic residues-rich tracts occupy residues 1265–1285 (TVKE…KEKT), 1294–1343 (ILGK…EKFK), and 1353–1383 (STQE…KGGE). At threonine 1385 the chain carries Phosphothreonine. Residues serine 1390, serine 1393, and serine 1417 each carry the phosphoserine modification. The segment covering 1416 to 1425 (PSPSHSSTVK) has biased composition (polar residues). Threonine 1443 is subject to Phosphothreonine. Positions 1449–1504 (KSKEREMDKKDLDKSRERSREREKKDEKDRKERKRDHSNNDREVPPDLTKRRKEEN) are enriched in basic and acidic residues. Serine 1450, serine 1486, and serine 1516 each carry phosphoserine. The stretch at 1464-1491 (RERSREREKKDEKDRKERKRDHSNNDRE) forms a coiled coil. The segment covering 1524–1552 (NEKDKEKNKSKSSGKEKGGDSFKSEKMDK) has biased composition (basic and acidic residues).

This sequence belongs to the THOC2 family. As to quaternary structure, component of the THO subcomplex, which is composed of THOC1, THOC2, THOC3, THOC5, THOC6 and THOC7. The THO subcomplex interacts with DDX39B to form the THO-DDX39B complex which multimerizes into a 28-subunit tetrameric assembly. Component of the transcription/export (TREX) complex at least composed of ALYREF/THOC4, DDX39B, SARNP/CIP29, CHTOP and the THO subcomplex; in the complex interacts with THOC1, THOC3, THOC5, THOC7 and DDX39B. TREX seems to have a dynamic structure involving ATP-dependent remodeling. Interacts with POLDIP3 and ZC3H11A.

It is found in the nucleus. Its subcellular location is the nucleus speckle. The protein resides in the cytoplasm. Functionally, component of the THO subcomplex of the TREX complex which is thought to couple mRNA transcription, processing and nuclear export, and which specifically associates with spliced mRNA and not with unspliced pre-mRNA. Required for efficient export of polyadenylated RNA and spliced mRNA. The THOC1-THOC2-THOC3 core complex alone is sufficient to bind export factor NXF1-NXT1 and promote ATPase activity of DDX39B; in the complex THOC2 is the only component that directly interacts with DDX39B. TREX is recruited to spliced mRNAs by a transcription-independent mechanism, binds to mRNA upstream of the exon-junction complex (EJC) and is recruited in a splicing- and cap-dependent manner to a region near the 5' end of the mRNA where it functions in mRNA export to the cytoplasm via the TAP/NXF1 pathway. Required for NXF1 localization to the nuclear rim. THOC2 (and probably the THO complex) is involved in releasing mRNA from nuclear speckle domains. Plays a role for proper neuronal development. In Rhinolophus ferrumequinum (Greater horseshoe bat), this protein is THO complex subunit 2 (THOC2).